The sequence spans 261 residues: ATP synthase subunit a (261 aa).

A run of 8 helical transmembrane segments spans residues 30 to 50, 63 to 83, 96 to 116, 125 to 145, 151 to 171, 187 to 207, 214 to 234, and 235 to 255; these read VLFT…GLFM, WQVA…ANIG, LFMF…VLGL, IAIT…VGFW, FFSL…IAPI, LFVA…FVIN, LWLG…ISAL, and ELLV…LYIN.

Belongs to the ATPase A chain family. F-type ATPases have 2 components, CF(1) - the catalytic core - and CF(0) - the membrane proton channel. CF(1) has five subunits: alpha(3), beta(3), gamma(1), delta(1), epsilon(1). CF(0) has three main subunits: a(1), b(2) and c(9-12). The alpha and beta chains form an alternating ring which encloses part of the gamma chain. CF(1) is attached to CF(0) by a central stalk formed by the gamma and epsilon chains, while a peripheral stalk is formed by the delta and b chains.

It localises to the cell inner membrane. Its function is as follows. Key component of the proton channel; it plays a direct role in the translocation of protons across the membrane. The polypeptide is ATP synthase subunit a (Sphingopyxis alaskensis (strain DSM 13593 / LMG 18877 / RB2256) (Sphingomonas alaskensis)).